The sequence spans 272 residues: MSTVDQSTVTTALSSSSSNRHQGNDTYSIPKHSGTTSTITITMNEVSFVKSYLSTLDSRPIKLRSDHVFDPEQVGLRVPYTLPRLHAPHPEMPKKTKQPLAPGSSKSITVHLKSARNPALEFSLPNTALTTTSVQDLKDAVRERVTDAQGNKISLDKIKILYKRKPVTGKTIAEVLADEPVRLSGGKEVEFGVMIIGGAQVAVSAGAGERASAEQKESYEPPKPAVGPSGESVVATEAFWDDLQGFLEQRLKDYDEANKLRVLFKEAWRSSF.

2 disordered regions span residues Met-1–Thr-35 and Leu-85–Ser-105. Residues Ile-108–Gly-198 enclose the Ubiquitin-like domain. Residues Ser-212–Glu-231 form a disordered region.

This sequence belongs to the GET5 family. Forms homodimers via its C-terminal domain. Component of the get4/get5/sgt2 sorting complex. Binds directly sgt12 homodimers.

It is found in the cytoplasm. Its function is as follows. Component of the get4/get5/sgt2 sorting complex involved in the GET (guided entry of TA proteins) pathway that leads to the insertion of tail-anchored (TA) proteins into the endoplasmic reticulum. Get4 and get5 form an obligate complex that catalyzes the transfer of tail-anchored proteins destined to the endoplasmic reticulum from sgt2 to the cytosolic targeting factor which then targets the TA protein to the ER membrane via get1/get2. This is Golgi to ER traffic protein 5 from Aspergillus fumigatus (strain ATCC MYA-4609 / CBS 101355 / FGSC A1100 / Af293) (Neosartorya fumigata).